The following is a 504-amino-acid chain: Protein phosphatase 1J (504 aa).

2 disordered regions span residues 1–102 and 194–217; these read MLNR…RLPW and PLCLPSTPGTPGVSSPSQLVSPQS. Low complexity predominate over residues 14–23; it reads SSSGTSSQRS. Threonine 41 carries the post-translational modification Phosphothreonine. Residues 59–73 are compositionally biased toward polar residues; that stretch reads TAETPVSFSRPTFLQ. Phosphoserine occurs at positions 65 and 75. The PPM-type phosphatase domain maps to 103 to 496; it reads STGYAEVINA…DDISVFVIPL (394 aa). A compositionally biased stretch (low complexity) spans 197 to 217; it reads LPSTPGTPGVSSPSQLVSPQS.

The protein belongs to the PP2C family. As to quaternary structure, interacts with UBE2I/UBC9.

It catalyses the reaction O-phospho-L-seryl-[protein] + H2O = L-seryl-[protein] + phosphate. The catalysed reaction is O-phospho-L-threonyl-[protein] + H2O = L-threonyl-[protein] + phosphate. This Rattus norvegicus (Rat) protein is Protein phosphatase 1J (Ppm1j).